Here is a 2135-residue protein sequence, read N- to C-terminus: Protein SUBSTANDARD STARCH GRAIN 4, chloroplastic (2135 aa).

Composition is skewed to low complexity over residues 1 to 10 (MSHCLRASPF) and 72 to 84 (QHQP…RQQQ). A chloroplast-targeting transit peptide spans 1-42 (MSHCLRASPFLSPPPPLLHPSRRRRHRQGGCIHTSPGTRPLV). Disordered stretches follow at residues 1 to 44 (MSHC…LVAR) and 58 to 89 (SDSS…PPPP). The Stromal portion of the chain corresponds to 43-104 (ARARFDPPPL…ASLAPLWREG (62 aa)). Residues 105–125 (LFLVRCSVFAAALSVAAALSW) traverse the membrane as a helical segment. Residues 126 to 2135 (YAQLRARSFV…LFEYSATSQG (2010 aa)) are Chloroplast intermembrane-facing. Positions 361–370 (RRRYRRKAHS) are enriched in basic residues. Disordered stretches follow at residues 361–382 (RRRY…SSQQ), 401–492 (SGNP…QVSE), and 1843–1869 (FLGS…SFKP). 3 stretches are compositionally biased toward polar residues: residues 373 to 382 (ISDTDNSSQQ), 454 to 490 (NFAS…NEQV), and 1846 to 1856 (SLSTSPDGQQS). The segment covering 1857 to 1866 (ETERTPEHGS) has biased composition (basic and acidic residues).

It belongs to the TamB family. As to quaternary structure, part of the TIC complex, which can interact with components of the TOC complex to form a larger import complex. As to expression, highly expressed in third leaf and developing seeds. Expressed in anthers, pistils, flag leaves and young panicles.

It is found in the plastid. The protein resides in the chloroplast inner membrane. It localises to the chloroplast intermembrane space. The protein localises to the chloroplast. Its subcellular location is the amyloplast. Its function is as follows. Part of the inner chloroplast membrane translocon complex (TIC) which associates with the outer chloroplast membrane translocon complex (TOC) and forms a supercomplex involved in protein precursor import into the chloroplast stroma. Required for the regulation of starch granule size in amyloplasts. The polypeptide is Protein SUBSTANDARD STARCH GRAIN 4, chloroplastic (Oryza sativa subsp. japonica (Rice)).